The following is a 357-amino-acid chain: Ribosomal RNA large subunit methyltransferase M (357 aa).

Residues Ser-183, 216–219 (APGG), Asp-235, Asp-255, and Asp-271 contribute to the S-adenosyl-L-methionine site. Residue Lys-300 is the Proton acceptor of the active site.

It belongs to the class I-like SAM-binding methyltransferase superfamily. RNA methyltransferase RlmE family. RlmM subfamily. In terms of assembly, monomer.

It localises to the cytoplasm. It carries out the reaction cytidine(2498) in 23S rRNA + S-adenosyl-L-methionine = 2'-O-methylcytidine(2498) in 23S rRNA + S-adenosyl-L-homocysteine + H(+). Catalyzes the 2'-O-methylation at nucleotide C2498 in 23S rRNA. This chain is Ribosomal RNA large subunit methyltransferase M, found in Pseudomonas savastanoi pv. phaseolicola (strain 1448A / Race 6) (Pseudomonas syringae pv. phaseolicola (strain 1448A / Race 6)).